The chain runs to 232 residues: GDT1-like protein 5 (232 aa).

The next 6 membrane-spanning stretches (helical) occupy residues 13 to 33, 40 to 60, 72 to 92, 135 to 155, 175 to 195, and 207 to 227; these read LAMT…AILA, LVLA…VSLG, THHV…WEGF, PFVL…TFFG, FGVV…AVMG, and MVGL…YLSG.

The protein belongs to the GDT1 family.

It localises to the membrane. This chain is GDT1-like protein 5, found in Oryza sativa subsp. japonica (Rice).